We begin with the raw amino-acid sequence, 1138 residues long: Mastermind-like protein 3 (1138 aa).

A compositionally biased stretch (polar residues) spans 37 to 48 (PNSTPAAPSSNH). Disordered regions lie at residues 37–68 (PNSTPAAPSSNHPAAGGCGGSGGPGGGSAAVP), 119–148 (EQRAKKSGAGTGKQQHPSKPQQDAEAASAE), 169–188 (RSPLNGDQQNGACDGNFSPT), 207–237 (PSNMPLPSASPLHQLDLKPSLPLQNSGTHTP), 334–480 (EEKK…QRAK), and 503–547 (QQQQ…PQAF). Gly residues predominate over residues 52 to 64 (GGCGGSGGPGGGS). 2 stretches are compositionally biased toward polar residues: residues 130–139 (GKQQHPSKPQ) and 173–188 (NGDQQNGACDGNFSPT). 2 stretches are compositionally biased toward polar residues: residues 343 to 359 (QPATETPLSQESASVKS) and 372 to 394 (GSPQARPSSSGPPFSTVSTATSL). The segment covering 395–411 (PSVASTPAAPNPASSPA) has biased composition (low complexity). Polar residues predominate over residues 414-426 (AVQSPQTPNQAHT). The span at 467–480 (QLKQMAAQQQQRAK) shows a compositional bias: low complexity. Lysine 603 carries the N6-acetyllysine modification. Disordered regions lie at residues 615–662 (RMTP…PRAH), 691–721 (HGQEQHPVGLPRTTGPMQSSVPPGSGGMVSG), 968–991 (LQGMPGRTSGELGPFNNGASYPLQ), 1024–1084 (AAMG…SQAY), and 1090–1109 (QDVSYNYSGDGAGGSFPGLP). Low complexity predominate over residues 633 to 649 (QQQQQQQQQQQQQQQQQ). Positions 1064–1084 (PPAQQQIPSGSFAPSSQSQAY) are enriched in polar residues.

Belongs to the mastermind family. Interacts through its N-terminal region with the ankyrin repeat region of the Notch proteins NOTCH1, NOTCH2, NOTCH3 and NOTCH4. Forms a DNA-binding complex with Notch proteins and RBPSUH/RBP-J kappa.

Its subcellular location is the nucleus speckle. Its function is as follows. Acts as a transcriptional coactivator for NOTCH proteins. Has been shown to amplify NOTCH-induced transcription of HES1. The polypeptide is Mastermind-like protein 3 (Homo sapiens (Human)).